The chain runs to 133 residues: Small ribosomal subunit protein uS8 (133 aa).

This sequence belongs to the universal ribosomal protein uS8 family. As to quaternary structure, part of the 30S ribosomal subunit. Contacts proteins S5 and S12.

Functionally, one of the primary rRNA binding proteins, it binds directly to 16S rRNA central domain where it helps coordinate assembly of the platform of the 30S subunit. The sequence is that of Small ribosomal subunit protein uS8 from Gloeothece citriformis (strain PCC 7424) (Cyanothece sp. (strain PCC 7424)).